The chain runs to 303 residues: Protein transport protein SEC13-2 (303 aa).

6 WD repeats span residues Ala-7 to Ser-46, Gly-53 to Gln-95, Val-102 to Thr-143, Ala-149 to Val-202, Gly-209 to Asp-251, and Lys-261 to Glu-300.

The protein belongs to the WD repeat SEC13 family. As to quaternary structure, the COPII coat is composed of at least 5 proteins: the SEC23/24 complex, the SEC13/31 complex, and the protein SAR1. Component of the nuclear pore complex (NPC). NPC constitutes the exclusive means of nucleocytoplasmic transport. NPCs allow the passive diffusion of ions and small molecules and the active, nuclear transport receptor-mediated bidirectional transport of macromolecules such as proteins, RNAs, ribonucleoparticles (RNPs), and ribosomal subunits across the nuclear envelope. Due to its 8-fold rotational symmetry, all subunits are present with 8 copies or multiples thereof.

It localises to the cytoplasmic vesicle. The protein resides in the COPII-coated vesicle membrane. Its subcellular location is the endoplasmic reticulum membrane. The protein localises to the nucleus. It is found in the nuclear pore complex. Component of the coat protein complex II (COPII) which promotes the formation of transport vesicles from the endoplasmic reticulum (ER). The coat has two main functions, the physical deformation of the endoplasmic reticulum membrane into vesicles and the selection of cargo molecules. It also functions as a component of the nuclear pore complex (NPC). NPC components, collectively referred to as nucleoporins (NUPs), can play the role of both NPC structural components and of docking or interaction partners for transiently associated nuclear transport factors. SEC13 is required for efficient mRNA export from the nucleus to the cytoplasm and for correct nuclear pore biogenesis and distribution. This Candida glabrata (strain ATCC 2001 / BCRC 20586 / JCM 3761 / NBRC 0622 / NRRL Y-65 / CBS 138) (Yeast) protein is Protein transport protein SEC13-2 (SEC132).